Consider the following 353-residue polypeptide: Photosystem II protein D1 (353 aa).

T2 bears the N-acetylthreonine mark. The residue at position 2 (T2) is a Phosphothreonine. 3 helical membrane passes run 29 to 46, 118 to 133, and 142 to 156; these read YIGW…TATS, HFLL…EWEL, and WIAV…AATA. Residue H118 participates in chlorophyll a binding. Y126 lines the pheophytin a pocket. [CaMn4O5] cluster contacts are provided by D170 and E189. The chain crosses the membrane as a helical span at residues 197 to 218; the sequence is FHMLGVAGVFGGSLFSAMHGSL. A chlorophyll a-binding site is contributed by H198. A quinone contacts are provided by residues H215 and 264–265; that span reads SF. H215 is a Fe cation binding site. Residue H272 participates in Fe cation binding. The helical transmembrane segment at 274 to 288 threads the bilayer; that stretch reads FLTAWPVVGIWFTAL. [CaMn4O5] cluster-binding residues include H332, E333, D342, and A344. A propeptide spanning residues 345 to 353 is cleaved from the precursor; that stretch reads VVEAPSTNG.

This sequence belongs to the reaction center PufL/M/PsbA/D family. PSII is composed of 1 copy each of membrane proteins PsbA, PsbB, PsbC, PsbD, PsbE, PsbF, PsbH, PsbI, PsbJ, PsbK, PsbL, PsbM, PsbT, PsbX, PsbY, PsbZ, Psb30/Ycf12, at least 3 peripheral proteins of the oxygen-evolving complex and a large number of cofactors. It forms dimeric complexes. The D1/D2 heterodimer binds P680, chlorophylls that are the primary electron donor of PSII, and subsequent electron acceptors. It shares a non-heme iron and each subunit binds pheophytin, quinone, additional chlorophylls, carotenoids and lipids. D1 provides most of the ligands for the Mn4-Ca-O5 cluster of the oxygen-evolving complex (OEC). There is also a Cl(-1) ion associated with D1 and D2, which is required for oxygen evolution. The PSII complex binds additional chlorophylls, carotenoids and specific lipids. serves as cofactor. Post-translationally, tyr-161 forms a radical intermediate that is referred to as redox-active TyrZ, YZ or Y-Z. C-terminally processed by CTPA; processing is essential to allow assembly of the oxygen-evolving complex and thus photosynthetic growth.

The protein resides in the plastid. Its subcellular location is the chloroplast thylakoid membrane. It carries out the reaction 2 a plastoquinone + 4 hnu + 2 H2O = 2 a plastoquinol + O2. In terms of biological role, photosystem II (PSII) is a light-driven water:plastoquinone oxidoreductase that uses light energy to abstract electrons from H(2)O, generating O(2) and a proton gradient subsequently used for ATP formation. It consists of a core antenna complex that captures photons, and an electron transfer chain that converts photonic excitation into a charge separation. The D1/D2 (PsbA/PsbD) reaction center heterodimer binds P680, the primary electron donor of PSII as well as several subsequent electron acceptors. The chain is Photosystem II protein D1 from Aethionema cordifolium (Lebanon stonecress).